A 417-amino-acid polypeptide reads, in one-letter code: Serine hydroxymethyltransferase (417 aa).

Residues Leu-117 and 121–123 (GHL) each bind (6S)-5,6,7,8-tetrahydrofolate. Lys-226 carries the post-translational modification N6-(pyridoxal phosphate)lysine.

It belongs to the SHMT family. In terms of assembly, homodimer. Pyridoxal 5'-phosphate serves as cofactor.

The protein localises to the cytoplasm. It carries out the reaction (6R)-5,10-methylene-5,6,7,8-tetrahydrofolate + glycine + H2O = (6S)-5,6,7,8-tetrahydrofolate + L-serine. It participates in one-carbon metabolism; tetrahydrofolate interconversion. It functions in the pathway amino-acid biosynthesis; glycine biosynthesis; glycine from L-serine: step 1/1. In terms of biological role, catalyzes the reversible interconversion of serine and glycine with tetrahydrofolate (THF) serving as the one-carbon carrier. This reaction serves as the major source of one-carbon groups required for the biosynthesis of purines, thymidylate, methionine, and other important biomolecules. Also exhibits THF-independent aldolase activity toward beta-hydroxyamino acids, producing glycine and aldehydes, via a retro-aldol mechanism. The polypeptide is Serine hydroxymethyltransferase (Shouchella clausii (strain KSM-K16) (Alkalihalobacillus clausii)).